We begin with the raw amino-acid sequence, 73 residues long: Protein SlyX homolog (73 aa).

Belongs to the SlyX family.

The protein is Protein SlyX homolog of Haemophilus ducreyi (strain 35000HP / ATCC 700724).